The following is a 271-amino-acid chain: Putative phosphoenolpyruvate synthase regulatory protein (271 aa).

151–158 contacts ADP; it reads GVSRSGKT.

Belongs to the pyruvate, phosphate/water dikinase regulatory protein family. PSRP subfamily.

It catalyses the reaction [pyruvate, water dikinase] + ADP = [pyruvate, water dikinase]-phosphate + AMP + H(+). The catalysed reaction is [pyruvate, water dikinase]-phosphate + phosphate + H(+) = [pyruvate, water dikinase] + diphosphate. Bifunctional serine/threonine kinase and phosphorylase involved in the regulation of the phosphoenolpyruvate synthase (PEPS) by catalyzing its phosphorylation/dephosphorylation. The sequence is that of Putative phosphoenolpyruvate synthase regulatory protein from Burkholderia cenocepacia (strain ATCC BAA-245 / DSM 16553 / LMG 16656 / NCTC 13227 / J2315 / CF5610) (Burkholderia cepacia (strain J2315)).